A 31-amino-acid chain; its full sequence is Cytochrome b6-f complex subunit 6 (31 aa).

Residues 4-24 traverse the membrane as a helical segment; that stretch reads LLSYFGLLLAALISTLVLFIG.

The protein belongs to the PetL family. As to quaternary structure, the 4 large subunits of the cytochrome b6-f complex are cytochrome b6, subunit IV (17 kDa polypeptide, PetD), cytochrome f and the Rieske protein, while the 4 small subunits are PetG, PetL, PetM and PetN. The complex functions as a dimer.

The protein localises to the plastid. It is found in the chloroplast thylakoid membrane. Its function is as follows. Component of the cytochrome b6-f complex, which mediates electron transfer between photosystem II (PSII) and photosystem I (PSI), cyclic electron flow around PSI, and state transitions. PetL is important for photoautotrophic growth as well as for electron transfer efficiency and stability of the cytochrome b6-f complex. In Psilotum nudum (Whisk fern), this protein is Cytochrome b6-f complex subunit 6.